The chain runs to 442 residues: Putative amino acid transporter YuiF (442 aa).

The next 11 membrane-spanning stretches (helical) occupy residues 21–41 (IVIA…LGLG), 51–71 (LGGN…AAAL), 103–123 (LIVL…PVHI), 146–166 (LIAC…PVGF), 190–210 (IPYA…LSVI), 236–256 (IGIA…LSQT), 259–279 (VEGM…SGVM), 292–312 (MVLM…SNVL), 335–355 (LGAL…GSSF), 364–384 (IFVP…AIIG), and 421–441 (VPTF…AALV).

It localises to the cell membrane. The sequence is that of Putative amino acid transporter YuiF (yuiF) from Bacillus subtilis (strain 168).